The sequence spans 414 residues: Phosphoglycerate kinase (414 aa).

(2R)-3-phosphoglycerate-binding residues include Val-23, Asp-24, Phe-25, Asn-26, Arg-39, Ser-62, His-63, Gly-65, and Arg-66. Tyr-75 bears the Phosphotyrosine mark. A Phosphoserine modification is found at Ser-76. Positions 121 and 122 each coordinate (2R)-3-phosphoglycerate. A Phosphoserine modification is found at Ser-143. The (2R)-3-phosphoglycerate site is built by His-168 and Arg-169. 3 positions are modified to phosphoserine: Ser-172, Ser-173, and Ser-183. Gly-211 lines the ADP pocket. Gly-211 contributes to the CDP binding site. AMP is bound by residues Ala-212 and Lys-213. Residue Ala-212 participates in ATP binding. Ala-212 serves as a coordination point for Mg(2+). The Mg(2+) site is built by Ala-215 and Asp-216. Residue Asp-216 coordinates CDP. Residue Lys-217 participates in AMP binding. Lys-217 serves as a coordination point for ATP. Residue Gly-235 coordinates ADP. Gly-235 serves as a coordination point for CDP. Residue Gly-236 coordinates AMP. Residue Gly-236 coordinates ATP. Phosphoserine occurs at positions 253 and 260. Thr-299 bears the Phosphothreonine mark. Gly-310 is an AMP binding site. Gly-310 contacts ATP. Ser-328 is modified (phosphoserine). Residues Gly-335, Ala-337, and Phe-340 each coordinate CDP. Phe-340 is a binding site for ADP. Residue Glu-341 participates in AMP binding. Residue Glu-341 participates in ATP binding. The residue at position 351 (Ser-351) is a Phosphoserine. Residues Asp-372 and Thr-373 each coordinate ATP. Asp-372 contributes to the Mg(2+) binding site. Residue Thr-373 is modified to Phosphothreonine. Phosphoserine is present on residues Ser-387, Ser-390, Ser-412, and Ser-413.

It belongs to the phosphoglycerate kinase family. Monomer. Requires Mg(2+) as cofactor.

It is found in the cytoplasm. Its subcellular location is the mitochondrion. The catalysed reaction is (2R)-3-phosphoglycerate + ATP = (2R)-3-phospho-glyceroyl phosphate + ADP. It participates in carbohydrate degradation; glycolysis; pyruvate from D-glyceraldehyde 3-phosphate: step 2/5. Its function is as follows. Catalyzes one of the two ATP producing reactions in the glycolytic pathway via the reversible conversion of 1,3-diphosphoglycerate to 3-phosphoglycerate. Both L- and D- forms of purine and pyrimidine nucleotides can be used as substrates, but the activity is much lower on pyrimidines. Negatively regulates the biosynthesis of acetyl-CoA from pyruvate in the mitochondrion. The sequence is that of Phosphoglycerate kinase (pgk1) from Schizosaccharomyces pombe (strain 972 / ATCC 24843) (Fission yeast).